The sequence spans 209 residues: MTELDINEIEAYNSNKMGWIELITGCMFAGKTEEFIRRLKVLSYAKKRVLAFKPSIDNRYSVENIISHSGSKLDSYLVKSSDEIKQIVEKENQIQQVDVIGIDEVQFFDENVVDIIEQLADNGIIVIVNGLDKDFRGLPFKNVDKLLVKAEFVTKLRARCHLCGSFANRSQRIVNGQPALWDSPLILVDGKESYEARCRKCFISPKKDV.

ATP contacts are provided by residues 25 to 32 (GCMFAGKT) and 103 to 106 (DEVQ). Catalysis depends on E104, which acts as the Proton acceptor. 4 residues coordinate Zn(2+): C160, C163, C198, and C201.

It belongs to the thymidine kinase family. As to quaternary structure, homotetramer.

The protein localises to the cytoplasm. It catalyses the reaction thymidine + ATP = dTMP + ADP + H(+). This is Thymidine kinase from Mycoplasma capricolum subsp. capricolum (strain California kid / ATCC 27343 / NCTC 10154).